The following is a 180-amino-acid chain: ATP-dependent protease subunit HslV (180 aa).

The active site involves Thr-7. 3 residues coordinate Na(+): Gly-163, Cys-166, and Thr-169.

It belongs to the peptidase T1B family. HslV subfamily. A double ring-shaped homohexamer of HslV is capped on each side by a ring-shaped HslU homohexamer. The assembly of the HslU/HslV complex is dependent on binding of ATP.

The protein resides in the cytoplasm. It catalyses the reaction ATP-dependent cleavage of peptide bonds with broad specificity.. Allosterically activated by HslU binding. In terms of biological role, protease subunit of a proteasome-like degradation complex believed to be a general protein degrading machinery. The sequence is that of ATP-dependent protease subunit HslV from Alcanivorax borkumensis (strain ATCC 700651 / DSM 11573 / NCIMB 13689 / SK2).